The sequence spans 357 residues: DNA replication and repair protein RecF (357 aa).

30–37 (GANGSGKT) contributes to the ATP binding site.

The protein belongs to the RecF family.

Its subcellular location is the cytoplasm. In terms of biological role, the RecF protein is involved in DNA metabolism; it is required for DNA replication and normal SOS inducibility. RecF binds preferentially to single-stranded, linear DNA. It also seems to bind ATP. The protein is DNA replication and repair protein RecF of Shigella flexneri serotype 5b (strain 8401).